Here is a 277-residue protein sequence, read N- to C-terminus: Large ribosomal subunit protein uL2 (277 aa).

A disordered region spans residues 219 to 277 (TVRGSVMNPNDHPHGGGEGKAPVGRKAPSTPWGKPALGLKTRNKKAKSDKLIVRRRNEK). Positions 264 to 277 (AKSDKLIVRRRNEK) are enriched in basic and acidic residues.

This sequence belongs to the universal ribosomal protein uL2 family. As to quaternary structure, part of the 50S ribosomal subunit. Forms a bridge to the 30S subunit in the 70S ribosome.

In terms of biological role, one of the primary rRNA binding proteins. Required for association of the 30S and 50S subunits to form the 70S ribosome, for tRNA binding and peptide bond formation. It has been suggested to have peptidyltransferase activity; this is somewhat controversial. Makes several contacts with the 16S rRNA in the 70S ribosome. This is Large ribosomal subunit protein uL2 from Streptococcus pneumoniae serotype 2 (strain D39 / NCTC 7466).